The chain runs to 183 residues: ATP synthase subunit delta (183 aa).

Belongs to the ATPase delta chain family. In terms of assembly, F-type ATPases have 2 components, F(1) - the catalytic core - and F(0) - the membrane proton channel. F(1) has five subunits: alpha(3), beta(3), gamma(1), delta(1), epsilon(1). F(0) has three main subunits: a(1), b(2) and c(10-14). The alpha and beta chains form an alternating ring which encloses part of the gamma chain. F(1) is attached to F(0) by a central stalk formed by the gamma and epsilon chains, while a peripheral stalk is formed by the delta and b chains.

The protein localises to the cell inner membrane. In terms of biological role, f(1)F(0) ATP synthase produces ATP from ADP in the presence of a proton or sodium gradient. F-type ATPases consist of two structural domains, F(1) containing the extramembraneous catalytic core and F(0) containing the membrane proton channel, linked together by a central stalk and a peripheral stalk. During catalysis, ATP synthesis in the catalytic domain of F(1) is coupled via a rotary mechanism of the central stalk subunits to proton translocation. Its function is as follows. This protein is part of the stalk that links CF(0) to CF(1). It either transmits conformational changes from CF(0) to CF(1) or is implicated in proton conduction. This chain is ATP synthase subunit delta, found in Rickettsia typhi (strain ATCC VR-144 / Wilmington).